The chain runs to 215 residues: Peptide methionine sulfoxide reductase MsrA (215 aa).

Cys-57 is an active-site residue.

It belongs to the MsrA Met sulfoxide reductase family.

The enzyme catalyses L-methionyl-[protein] + [thioredoxin]-disulfide + H2O = L-methionyl-(S)-S-oxide-[protein] + [thioredoxin]-dithiol. The catalysed reaction is [thioredoxin]-disulfide + L-methionine + H2O = L-methionine (S)-S-oxide + [thioredoxin]-dithiol. Functionally, has an important function as a repair enzyme for proteins that have been inactivated by oxidation. Catalyzes the reversible oxidation-reduction of methionine sulfoxide in proteins to methionine. The polypeptide is Peptide methionine sulfoxide reductase MsrA (Saccharophagus degradans (strain 2-40 / ATCC 43961 / DSM 17024)).